The following is a 291-amino-acid chain: MFNKIGIFGKYSGIQSWDLIDKLILYFQKKKKTVILDQRSCADFPIERYGIERLERDALMKEIDFAVVVGGDGTFLDVARCIVDYNIPILGVNLGRLGFLADVSPDTMMVTLDEVLADDYTCEERTLLHVLIKKDGETLFDEVAFNDVVLHKNDSPRMIEFETFVDNRFLNSQRSDGLIIATPTGSTAYSLSAGGPIVDPGLNAMTLVSINPHTMSNRPVVVSGDSEILIRPHDNCSGTASIICDGQLTFQIEAKHETYVTRHPNFIKMVHPKNHDHYELLRAKLNWGQKL.

D72 acts as the Proton acceptor in catalysis. Residues 72-73, 146-147, R157, R174, D176, 187-192, and Q247 each bind NAD(+); these read DG, ND, and TAYSLS.

It belongs to the NAD kinase family. Requires a divalent metal cation as cofactor.

The protein resides in the cytoplasm. The catalysed reaction is NAD(+) + ATP = ADP + NADP(+) + H(+). Its function is as follows. Involved in the regulation of the intracellular balance of NAD and NADP, and is a key enzyme in the biosynthesis of NADP. Catalyzes specifically the phosphorylation on 2'-hydroxyl of the adenosine moiety of NAD to yield NADP. The chain is NAD kinase from Hydrogenovibrio crunogenus (strain DSM 25203 / XCL-2) (Thiomicrospira crunogena).